The chain runs to 23 residues: Basic phospholipase A2 Smb-N6 (23 aa).

Belongs to the phospholipase A2 family. Group II subfamily. Ca(2+) serves as cofactor. In terms of processing, contains 7 disulfide bonds. Expressed by the venom gland.

It localises to the secreted. It carries out the reaction a 1,2-diacyl-sn-glycero-3-phosphocholine + H2O = a 1-acyl-sn-glycero-3-phosphocholine + a fatty acid + H(+). Functionally, snake venom phospholipase A2 (PLA2) that shows myotoxic activities. PLA2 catalyzes the calcium-dependent hydrolysis of the 2-acyl groups in 3-sn-phosphoglycerides. The polypeptide is Basic phospholipase A2 Smb-N6 (Sistrurus miliarius barbouri (Dusky pigmy rattlesnake)).